We begin with the raw amino-acid sequence, 87 residues long: Retinal rod rhodopsin-sensitive cGMP 3',5'-cyclic phosphodiesterase subunit gamma (87 aa).

An N-acetylmethionine modification is found at Met-1. Residues 1–12 (MNLEPPKAEIRS) show a composition bias toward basic and acidic residues. The tract at residues 1–55 (MNLEPPKAEIRSATRVIGGPVTPRKGPPKFKQRQTRQFKSKPPKKGVQGFGDDIP) is disordered. Over residues 26-44 (GPPKFKQRQTRQFKSKPPK) the composition is skewed to basic residues.

This sequence belongs to the rod/cone cGMP-PDE gamma subunit family. In terms of assembly, oligomer composed of two catalytic chains (alpha and beta), an inhibitory chain (gamma) and the delta chain.

It carries out the reaction 3',5'-cyclic GMP + H2O = GMP + H(+). In terms of biological role, participates in processes of transmission and amplification of the visual signal. cGMP-PDEs are the effector molecules in G-protein-mediated phototransduction in vertebrate rods and cones. The sequence is that of Retinal rod rhodopsin-sensitive cGMP 3',5'-cyclic phosphodiesterase subunit gamma (PDE6G) from Canis lupus familiaris (Dog).